The following is a 406-amino-acid chain: Protein PHYTOCHROME KINASE SUBSTRATE 4 (406 aa).

Residues 106-119 (SWNSQTGLLSNKNR) show a composition bias toward polar residues. The tract at residues 106–133 (SWNSQTGLLSNKNRQGSDRDGRRSSKKG) is disordered.

This sequence belongs to the PKS family. In terms of assembly, interacts in vitro with PHYA and PHYB. As to expression, expressed in the hypocotyl elongation zone. Not found in the root elongation zone.

Its function is as follows. Modulates phytochrome-mediated control of hypocotyl growth orientation. Involved in PHYA and PHYB signaling. Acts as an inhibitor of asymmetric growth. Not involved in the control of leaf flattening. This Arabidopsis thaliana (Mouse-ear cress) protein is Protein PHYTOCHROME KINASE SUBSTRATE 4 (PKS4).